We begin with the raw amino-acid sequence, 88 residues long: UPF0367 protein Tery_1229 (88 aa).

This sequence belongs to the UPF0367 family.

This is UPF0367 protein Tery_1229 from Trichodesmium erythraeum (strain IMS101).